Here is a 1061-residue protein sequence, read N- to C-terminus: Transcription termination factor 2 (1061 aa).

2 disordered regions span residues 1 to 163 (MSSE…TAEA) and 212 to 253 (ILSS…VKTS). A compositionally biased stretch (low complexity) spans 32 to 46 (LSKSSRLSKSSRPSS). Residues S108 and S110 each carry the phosphoserine modification. Positions 138 to 152 (LSDDDSEIEYSDEVQ) are enriched in acidic residues. Phosphoserine is present on residues S214 and S215. A Phosphothreonine modification is found at T216. The span at 237-253 (KSLSPRSSAGASVVKTS) shows a compositional bias: polar residues. The Helicase ATP-binding domain maps to 452–652 (WRERKLPRGG…YALLKFLRCS (201 aa)). An ATP-binding site is contributed by 465–472 (DDMGLGKT). The interval 485 to 523 (GQEMSEGKDESSDSDSEDDKNKKRKSVTGWKSKGRKDTR) is disordered. Residues 506–522 (KKRKSVTGWKSKGRKDT) are compositionally biased toward basic residues. A DEAH box motif is present at residues 603 to 606 (DEAH). Positions 891-1056 (KINMVIQILK…SSKLTIDDLK (166 aa)) constitute a Helicase C-terminal domain.

The protein belongs to the SNF2/RAD54 helicase family.

It is found in the nucleus. DsDNA-dependent ATPase which acts as a transcription termination factor by coupling ATP hydrolysis with removal of RNA polymerase II from the DNA template. In Drosophila melanogaster (Fruit fly), this protein is Transcription termination factor 2 (lds).